The sequence spans 193 residues: PXMP2/4 family protein 2 (193 aa).

The next 4 helical transmembrane spans lie at 56-78, 96-116, 132-152, and 160-180; these read VATM…YRSL, IDQL…TNFI, LFYA…INFS, and VLYS…ISFD.

It belongs to the peroxisomal membrane protein PXMP2/4 family.

It is found in the membrane. This is PXMP2/4 family protein 2 from Dictyostelium discoideum (Social amoeba).